The following is a 248-amino-acid chain: tRNA1(Val) (adenine(37)-N6)-methyltransferase (248 aa).

The protein belongs to the methyltransferase superfamily. tRNA (adenine-N(6)-)-methyltransferase family.

It is found in the cytoplasm. It carries out the reaction adenosine(37) in tRNA1(Val) + S-adenosyl-L-methionine = N(6)-methyladenosine(37) in tRNA1(Val) + S-adenosyl-L-homocysteine + H(+). In terms of biological role, specifically methylates the adenine in position 37 of tRNA(1)(Val) (anticodon cmo5UAC). The protein is tRNA1(Val) (adenine(37)-N6)-methyltransferase of Musicola paradisiaca (strain Ech703) (Dickeya paradisiaca).